Consider the following 138-residue polypeptide: Lutropin subunit beta (138 aa).

A signal peptide spans 1 to 19 (RYQELTVLLLLLLEGGSWG). 6 disulfides stabilise this stretch: cysteine 27–cysteine 75, cysteine 41–cysteine 90, cysteine 44–cysteine 128, cysteine 52–cysteine 106, cysteine 56–cysteine 108, and cysteine 111–cysteine 118. N-linked (GlcNAc...) asparagine glycosylation is present at asparagine 31.

Belongs to the glycoprotein hormones subunit beta family. Heterodimer of a common alpha chain and a unique beta chain which confers biological specificity to thyrotropin, lutropin, follitropin and gonadotropin.

It is found in the secreted. In terms of biological role, promotes spermatogenesis and ovulation by stimulating the testes and ovaries to synthesize steroids. In Osphranter rufus (Red kangaroo), this protein is Lutropin subunit beta (LHB).